Consider the following 354-residue polypeptide: UDP-N-acetylglucosamine--N-acetylmuramyl-(pentapeptide) pyrophosphoryl-undecaprenol N-acetylglucosamine transferase (354 aa).

UDP-N-acetyl-alpha-D-glucosamine-binding positions include 13-15 (SGG), asparagine 125, arginine 161, serine 189, isoleucine 242, 261-266 (ALTVSE), and glutamine 286.

Belongs to the glycosyltransferase 28 family. MurG subfamily.

It localises to the cell inner membrane. The catalysed reaction is di-trans,octa-cis-undecaprenyl diphospho-N-acetyl-alpha-D-muramoyl-L-alanyl-D-glutamyl-meso-2,6-diaminopimeloyl-D-alanyl-D-alanine + UDP-N-acetyl-alpha-D-glucosamine = di-trans,octa-cis-undecaprenyl diphospho-[N-acetyl-alpha-D-glucosaminyl-(1-&gt;4)]-N-acetyl-alpha-D-muramoyl-L-alanyl-D-glutamyl-meso-2,6-diaminopimeloyl-D-alanyl-D-alanine + UDP + H(+). It participates in cell wall biogenesis; peptidoglycan biosynthesis. In terms of biological role, cell wall formation. Catalyzes the transfer of a GlcNAc subunit on undecaprenyl-pyrophosphoryl-MurNAc-pentapeptide (lipid intermediate I) to form undecaprenyl-pyrophosphoryl-MurNAc-(pentapeptide)GlcNAc (lipid intermediate II). This chain is UDP-N-acetylglucosamine--N-acetylmuramyl-(pentapeptide) pyrophosphoryl-undecaprenol N-acetylglucosamine transferase, found in Buchnera aphidicola subsp. Schizaphis graminum (strain Sg).